Consider the following 729-residue polypeptide: Glycine--tRNA ligase (729 aa).

Residues 1 to 33 (MPCLLPSLLRATRAALPLLSPPRVVAASASQRL) constitute a mitochondrion transit peptide. The 57-residue stretch at 53–109 (LLAPLRLAVRQQGDFVRKLKEDKAPQVDVDRAVAELKARKRVLEAKELALQPKDDIV) folds into the WHEP-TRS domain. K194 carries the N6-acetyllysine modification. A glycine-binding site is contributed by E289. ATP contacts are provided by residues 321-323 (RNE) and 332-333 (RV). E340 serves as a coordination point for glycine. Phosphotyrosine is present on Y443. 447-448 (EI) lines the ATP pocket. The residue at position 491 (K491) is an N6-acetyllysine. Glycine is bound at residue 566–568 (EPS). Position 573 (R573) interacts with ATP. S690 is modified (phosphoserine). Residue T726 is modified to Phosphothreonine.

It belongs to the class-II aminoacyl-tRNA synthetase family. Homodimer.

Its subcellular location is the cytoplasm. The protein resides in the mitochondrion. The protein localises to the cell projection. It localises to the axon. It is found in the secreted. Its subcellular location is the extracellular exosome. It catalyses the reaction tRNA(Gly) + glycine + ATP = glycyl-tRNA(Gly) + AMP + diphosphate. The catalysed reaction is 2 ATP + H(+) = P(1),P(4)-bis(5'-adenosyl) tetraphosphate + diphosphate. In terms of biological role, catalyzes the ATP-dependent ligation of glycine to the 3'-end of its cognate tRNA, via the formation of an aminoacyl-adenylate intermediate (Gly-AMP). Also produces diadenosine tetraphosphate (Ap4A), a universal pleiotropic signaling molecule needed for cell regulation pathways, by direct condensation of 2 ATPs. Thereby, may play a special role in Ap4A homeostasis. The polypeptide is Glycine--tRNA ligase (Gars1) (Mus musculus (Mouse)).